A 433-amino-acid chain; its full sequence is uncharacterized protein (433 aa).

A signal peptide spans 1 to 26 (MTRRAEFEMGLFVILQSMFLISLCSS). N-linked (GlcNAc...) asparagine glycosylation is found at N59, N72, N125, N159, N210, N275, N282, and N323. A405 is lipidated: GPI-anchor amidated alanine. The propeptide at 406–433 (SSQPRLHDEGVTRLVIFVLSMLLVMLLS) is removed in mature form.

It is found in the cell membrane. This is an uncharacterized protein from Arabidopsis thaliana (Mouse-ear cress).